Here is a 393-residue protein sequence, read N- to C-terminus: NAD(P)H-quinone oxidoreductase subunit H, chloroplastic (393 aa).

This sequence belongs to the complex I 49 kDa subunit family. As to quaternary structure, NDH is composed of at least 16 different subunits, 5 of which are encoded in the nucleus.

The protein resides in the plastid. The protein localises to the chloroplast thylakoid membrane. The catalysed reaction is a plastoquinone + NADH + (n+1) H(+)(in) = a plastoquinol + NAD(+) + n H(+)(out). It catalyses the reaction a plastoquinone + NADPH + (n+1) H(+)(in) = a plastoquinol + NADP(+) + n H(+)(out). In terms of biological role, NDH shuttles electrons from NAD(P)H:plastoquinone, via FMN and iron-sulfur (Fe-S) centers, to quinones in the photosynthetic chain and possibly in a chloroplast respiratory chain. The immediate electron acceptor for the enzyme in this species is believed to be plastoquinone. Couples the redox reaction to proton translocation, and thus conserves the redox energy in a proton gradient. This Lactuca sativa (Garden lettuce) protein is NAD(P)H-quinone oxidoreductase subunit H, chloroplastic.